The primary structure comprises 380 residues: Cytochrome b (380 aa).

Helical transmembrane passes span 34–54 (FGSL…LLAM), 78–99 (WLIR…FLHI), 114–134 (WNTG…GYVL), and 179–199 (FFAL…IHLI). Positions 84 and 98 each coordinate heme b. Residues histidine 183 and histidine 197 each contribute to the heme b site. Position 202 (histidine 202) interacts with a ubiquinone. Helical transmembrane passes span 227 to 247 (LKDI…ALFS), 289 to 309 (LGGV…PFLH), 321 to 341 (LSQT…WVGS), and 348 to 368 (FIII…ILFP).

Belongs to the cytochrome b family. The cytochrome bc1 complex contains 11 subunits: 3 respiratory subunits (MT-CYB, CYC1 and UQCRFS1), 2 core proteins (UQCRC1 and UQCRC2) and 6 low-molecular weight proteins (UQCRH/QCR6, UQCRB/QCR7, UQCRQ/QCR8, UQCR10/QCR9, UQCR11/QCR10 and a cleavage product of UQCRFS1). This cytochrome bc1 complex then forms a dimer. It depends on heme b as a cofactor.

It localises to the mitochondrion inner membrane. Its function is as follows. Component of the ubiquinol-cytochrome c reductase complex (complex III or cytochrome b-c1 complex) that is part of the mitochondrial respiratory chain. The b-c1 complex mediates electron transfer from ubiquinol to cytochrome c. Contributes to the generation of a proton gradient across the mitochondrial membrane that is then used for ATP synthesis. The protein is Cytochrome b (MT-CYB) of Tragopan temminckii (Temminck's tragopan).